The sequence spans 331 residues: Probable allantoicase (331 aa).

This sequence belongs to the allantoicase family.

The catalysed reaction is allantoate + H2O = (S)-ureidoglycolate + urea. Its pathway is nitrogen metabolism; (S)-allantoin degradation; (S)-ureidoglycolate from allantoate (aminidohydrolase route): step 1/1. The sequence is that of Probable allantoicase from Pseudomonas fluorescens (strain SBW25).